A 147-amino-acid chain; its full sequence is Ribonuclease 4 (147 aa).

Residues 1–28 (MALQRTHSLLLLLLLTLLGLGLVQPSYG) form the signal peptide. A Pyrrolidone carboxylic acid modification is found at glutamine 29. The dUMP site is built by arginine 35, histidine 40, lysine 68, asparagine 71, and threonine 72. Histidine 40 serves as the catalytic Proton acceptor. 4 cysteine pairs are disulfide-bonded: cysteine 53/cysteine 109, cysteine 67/cysteine 120, cysteine 85/cysteine 135, and cysteine 92/cysteine 99. The active-site Proton donor is the histidine 144. Phenylalanine 145 lines the dUMP pocket.

Belongs to the pancreatic ribonuclease family.

The protein resides in the secreted. Functionally, cleaves preferentially after uridine bases. Has antimicrobial activity against uropathogenic E.coli (UPEC). Probably contributes to urinary tract sterility. This is Ribonuclease 4 (RNASE4) from Pongo abelii (Sumatran orangutan).